Here is a 1128-residue protein sequence, read N- to C-terminus: Testis-expressed protein 2 (1128 aa).

Disordered regions lie at residues 1-28 (MTSLNGRHAEKTIDMPKPSAPKVHVQRS), 71-99 (AKEDLYLESQGGHDPAGPVSTAPADGLSV), and 130-279 (PLAL…FFKV). Over residues 130–186 (PLALSPGSSSSGPLASSPSVSSLSEQKTSSSSPLSSPSKSPVLSSSASSSALSSAKP) the composition is skewed to low complexity. Residue S195 is modified to Phosphoserine. Over residues 248-274 (QFTQPRNTGGDSKTAPSSPLTSPSDTR) the composition is skewed to polar residues. Position 261 is a phosphothreonine (T261). S264, S265, S269, and S294 each carry phosphoserine. The segment at 345 to 387 (KEEEGDSEGEGYGSDSNTSRSDHLKPTEDASKEVEPKGSQASS) is disordered. Residues 364–380 (RSDHLKPTEDASKEVEP) are compositionally biased toward basic and acidic residues. Transmembrane regions (helical) follow at residues 473 to 493 (TLGFFIMCVYAYLILPLPYYM) and 495 to 515 (GLFLGVGLGFMTAVCMIWFFT). An N-linked (GlcNAc...) asparagine glycan is attached at N593. The span at 645-671 (SKAQSDKEATEEKPPPEKELPSEDLKK) shows a compositional bias: basic and acidic residues. Disordered stretches follow at residues 645 to 688 (SKAQ…DPIL), 716 to 765 (RKPA…QKEL), 787 to 821 (QDNRSPHRSPVQSAESSPTASKKLPEAPPSEEEEQ), and 945 to 981 (ADSDEESSSAGSSEEDDPPEPTAGDKQPLPGAEGYVG). 7 positions are modified to phosphoserine: S733, S739, S745, S749, S752, S799, and S816. Over residues 736–751 (SSPSGHLSHSRSSSKG) the composition is skewed to low complexity. Polar residues predominate over residues 796–806 (PVQSAESSPTA). Residues 817–1102 (EEEEQEAWVN…MPNMDDVYIP (286 aa)) enclose the SMP-LTD domain. Over residues 946–963 (DSDEESSSAGSSEEDDPP) the composition is skewed to acidic residues.

It is found in the endoplasmic reticulum membrane. Its subcellular location is the nucleus membrane. In terms of biological role, during endoplasmic reticulum (ER) stress or when cellular ceramide levels increase, may induce contacts between the ER and medial-Golgi complex to facilitate non-vesicular transport of ceramides from the ER to the Golgi complex where they are converted to complex sphingolipids, preventing toxic ceramide accumulation. This is Testis-expressed protein 2 (Tex2) from Mus musculus (Mouse).